Consider the following 324-residue polypeptide: Tubulin alpha-8 chain (324 aa).

The GTP site is built by serine 15, glycine 19, threonine 20, threonine 54, asparagine 81, and asparagine 103. Glutamate 129 is an active-site residue.

It belongs to the tubulin family. As to quaternary structure, dimer of alpha and beta chains. A typical microtubule is a hollow water-filled tube with an outer diameter of 25 nm and an inner diameter of 15 nM. Alpha-beta heterodimers associate head-to-tail to form protofilaments running lengthwise along the microtubule wall with the beta-tubulin subunit facing the microtubule plus end conferring a structural polarity. Microtubules usually have 13 protofilaments but different protofilament numbers can be found in some organisms and specialized cells. Mg(2+) is required as a cofactor. Some glutamate residues at the C-terminus are polyglycylated, resulting in polyglycine chains on the gamma-carboxyl group. Glycylation is mainly limited to tubulin incorporated into axonemes (cilia and flagella) whereas glutamylation is prevalent in neuronal cells, centrioles, axonemes, and the mitotic spindle. Both modifications can coexist on the same protein on adjacent residues, and lowering polyglycylation levels increases polyglutamylation, and reciprocally. The precise function of polyglycylation is still unclear. Post-translationally, some glutamate residues at the C-terminus are polyglutamylated, resulting in polyglutamate chains on the gamma-carboxyl group. Polyglutamylation plays a key role in microtubule severing by spastin (SPAST). SPAST preferentially recognizes and acts on microtubules decorated with short polyglutamate tails: severing activity by SPAST increases as the number of glutamates per tubulin rises from one to eight, but decreases beyond this glutamylation threshold.

The protein resides in the cytoplasm. Its subcellular location is the cytoskeleton. The enzyme catalyses GTP + H2O = GDP + phosphate + H(+). In terms of biological role, tubulin is the major constituent of microtubules, a cylinder consisting of laterally associated linear protofilaments composed of alpha- and beta-tubulin heterodimers. Microtubules grow by the addition of GTP-tubulin dimers to the microtubule end, where a stabilizing cap forms. Below the cap, tubulin dimers are in GDP-bound state, owing to GTPase activity of alpha-tubulin. In Gallus gallus (Chicken), this protein is Tubulin alpha-8 chain.